The chain runs to 29 residues: Cycloviolacin-O16 (29 aa).

A cross-link (cyclopeptide (Gly-Asn)) is located at residues 1–29 (GLPCGETCFTGKCYTPGCSCSYPICKKIN). 3 disulfides stabilise this stretch: C4/C18, C8/C20, and C13/C25.

In terms of processing, this is a cyclic peptide.

Its function is as follows. Probably participates in a plant defense mechanism. This is Cycloviolacin-O16 from Viola odorata (Sweet violet).